The sequence spans 882 residues: Probable LRR receptor-like serine/threonine-protein kinase At1g12460 (882 aa).

Positions 1-21 are cleaved as a signal peptide; that stretch reads MRKVHLFLVLVHFIYISTSRS. Over 22–515 the chain is Extracellular; the sequence is DSISERDILL…SRNSDALSIS (494 aa). Residue asparagine 76 is glycosylated (N-linked (GlcNAc...) asparagine). LRR repeat units lie at residues 92–113, 116–138, 140–162, 165–187, 189–210, 213–235, 237–258, 261–283, 285–308, 309–331, 333–355, 357–379, 381–404, 405–427, 429–451, and 453–475; these read FIRVLNLFGNRFTGNLPLDYFK, TLWTINVSSNALSGPIPEFISEL, SLRFLDLSKNGFTGEIPVSLFKF, KTKFVSLAHNNIFGSIPASIVNC, NLVGFDFSYNNLKGVLPPRICD, VLEYISVRNNLLSGDVSEEIQKC, RLILVDLGSNLFHGLAPFAVLT, NITYFNVSWNRFGGEIGEIVDCS, SLEFLDASSNELTGRIPTGVMGCK, SLKLLDLESNKLNGSIPGSIGKM, SLSVIRLGNNSIDGVIPRDIGSL, FLQVLNLHNLNLIGEVPEDISNC, VLLELDVSGNDLEGKISKKLLNLT, NIKILDLHRNRLNGSIPPELGNL, KVQFLDLSQNSLSGPIPSSLGSL, and TLTHFNVSYNNLSGVIPPVPMIQ. Asparagine 121 carries an N-linked (GlcNAc...) asparagine glycan. N-linked (GlcNAc...) asparagine glycans are attached at residues asparagine 261 and asparagine 266. Asparagine 321 and asparagine 341 each carry an N-linked (GlcNAc...) asparagine glycan. Asparagine 402, asparagine 417, and asparagine 426 each carry an N-linked (GlcNAc...) asparagine glycan. Asparagine 458 and asparagine 463 each carry an N-linked (GlcNAc...) asparagine glycan. A helical membrane pass occupies residues 516-536; sequence VIIVIIAAAVILFGVCIVLAL. Residues 537–882 lie on the Cytoplasmic side of the membrane; that stretch reads NLRARKRRKD…LESIRNGFGS (346 aa). The residue at position 589 (threonine 589) is a Phosphothreonine. Residues 593-876 enclose the Protein kinase domain; that stretch reads LDKENIIGMG…AEVVQVLESI (284 aa). ATP-binding positions include 599–607 and lysine 621; that span reads IGMGSIGSV. At tyrosine 770 the chain carries Phosphotyrosine.

It belongs to the protein kinase superfamily. Ser/Thr protein kinase family.

It is found in the cell membrane. The enzyme catalyses L-seryl-[protein] + ATP = O-phospho-L-seryl-[protein] + ADP + H(+). It catalyses the reaction L-threonyl-[protein] + ATP = O-phospho-L-threonyl-[protein] + ADP + H(+). This is Probable LRR receptor-like serine/threonine-protein kinase At1g12460 from Arabidopsis thaliana (Mouse-ear cress).